The primary structure comprises 229 residues: 2,3-bisphosphoglycerate-dependent phosphoglycerate mutase (229 aa).

Substrate contacts are provided by residues arginine 7–asparagine 14, threonine 20–glycine 21, arginine 59, glutamate 86–tyrosine 89, lysine 97, arginine 113–arginine 114, and glycine 182–asparagine 183. The active-site Tele-phosphohistidine intermediate is the histidine 8. The active-site Proton donor/acceptor is the glutamate 86.

Belongs to the phosphoglycerate mutase family. BPG-dependent PGAM subfamily.

It carries out the reaction (2R)-2-phosphoglycerate = (2R)-3-phosphoglycerate. Its pathway is carbohydrate degradation; glycolysis; pyruvate from D-glyceraldehyde 3-phosphate: step 3/5. Its function is as follows. Catalyzes the interconversion of 2-phosphoglycerate and 3-phosphoglycerate. The polypeptide is 2,3-bisphosphoglycerate-dependent phosphoglycerate mutase (Listeria innocua serovar 6a (strain ATCC BAA-680 / CLIP 11262)).